The following is a 171-amino-acid chain: Co-chaperone protein HscB (171 aa).

The 73-residue stretch at 2–74 (DYFTLFGLPA…LTRAEYLLSL (73 aa)) folds into the J domain.

The protein belongs to the HscB family. As to quaternary structure, interacts with HscA and stimulates its ATPase activity. Interacts with IscU.

Its function is as follows. Co-chaperone involved in the maturation of iron-sulfur cluster-containing proteins. Seems to help targeting proteins to be folded toward HscA. This is Co-chaperone protein HscB from Salmonella schwarzengrund (strain CVM19633).